A 526-amino-acid polypeptide reads, in one-letter code: Glucose-6-phosphate isomerase (526 aa).

Glu320 serves as the catalytic Proton donor. Residues His349 and Lys453 contribute to the active site.

The protein belongs to the GPI family.

The protein resides in the cytoplasm. It catalyses the reaction alpha-D-glucose 6-phosphate = beta-D-fructose 6-phosphate. The protein operates within carbohydrate biosynthesis; gluconeogenesis. Its pathway is carbohydrate degradation; glycolysis; D-glyceraldehyde 3-phosphate and glycerone phosphate from D-glucose: step 2/4. Its function is as follows. Catalyzes the reversible isomerization of glucose-6-phosphate to fructose-6-phosphate. The chain is Glucose-6-phosphate isomerase from Gloeothece citriformis (strain PCC 7424) (Cyanothece sp. (strain PCC 7424)).